Here is a 467-residue protein sequence, read N- to C-terminus: Asparagine--tRNA ligase (467 aa).

Belongs to the class-II aminoacyl-tRNA synthetase family. Homodimer.

The protein localises to the cytoplasm. It catalyses the reaction tRNA(Asn) + L-asparagine + ATP = L-asparaginyl-tRNA(Asn) + AMP + diphosphate + H(+). The polypeptide is Asparagine--tRNA ligase (Actinobacillus succinogenes (strain ATCC 55618 / DSM 22257 / CCUG 43843 / 130Z)).